The sequence spans 62 residues: Conotoxin Pn-B0151 (62 aa).

Residues 1–22 form the signal peptide; that stretch reads MRCLPVFVILLLLIASTPSVDA. A propeptide spanning residues 23-48 is cleaved from the precursor; it reads LQKTKDDMPLASFHDNVKRILQTLSN.

Belongs to the conotoxin T superfamily. Contains 2 disulfide bonds that can be either 'C1-C3, C2-C4' or 'C1-C4, C2-C3', since these disulfide connectivities have been observed for conotoxins with cysteine framework V (for examples, see AC P0DQQ7 and AC P81755). As to expression, expressed by the venom duct.

The protein resides in the secreted. The chain is Conotoxin Pn-B0151 from Conus pennaceus (Feathered cone).